We begin with the raw amino-acid sequence, 188 residues long: Peptidyl-tRNA hydrolase (188 aa).

Tyrosine 14 lines the tRNA pocket. Histidine 19 functions as the Proton acceptor in the catalytic mechanism. Tyrosine 60 and asparagine 62 together coordinate tRNA.

The protein belongs to the PTH family. In terms of assembly, monomer.

It localises to the cytoplasm. The catalysed reaction is an N-acyl-L-alpha-aminoacyl-tRNA + H2O = an N-acyl-L-amino acid + a tRNA + H(+). In terms of biological role, hydrolyzes ribosome-free peptidyl-tRNAs (with 1 or more amino acids incorporated), which drop off the ribosome during protein synthesis, or as a result of ribosome stalling. Functionally, catalyzes the release of premature peptidyl moieties from peptidyl-tRNA molecules trapped in stalled 50S ribosomal subunits, and thus maintains levels of free tRNAs and 50S ribosomes. The sequence is that of Peptidyl-tRNA hydrolase from Mycoplasmopsis agalactiae (strain NCTC 10123 / CIP 59.7 / PG2) (Mycoplasma agalactiae).